The sequence spans 387 residues: Probable multidrug resistance protein EmrK (387 aa).

Topologically, residues 1–16 (MEQINSNKKHSNRRKY) are cytoplasmic. Residues 17 to 37 (FSLLAVVLFIAFSGAYAYWSM) form a helical membrane-spanning segment. The Periplasmic portion of the chain corresponds to 38-387 (ELEDMISTDD…SNIISHNGQL (350 aa)).

It belongs to the membrane fusion protein (MFP) (TC 8.A.1) family. As to quaternary structure, part of the tripartite efflux system EmrYK-TolC, which is composed of an inner membrane transporter, EmrY, a membrane fusion protein, EmrK, and an outer membrane component, TolC. The complex forms a large protein conduit and can translocate molecules across both the inner and outer membranes.

Its subcellular location is the cell inner membrane. Functionally, part of the tripartite efflux system EmrYK-TolC, which confers resistance to various drugs. This is Probable multidrug resistance protein EmrK (emrK) from Escherichia coli (strain K12).